We begin with the raw amino-acid sequence, 218 residues long: Methylthioribulose-1-phosphate dehydratase (218 aa).

Residues H107 and H109 each coordinate Zn(2+).

This sequence belongs to the aldolase class II family. MtnB subfamily. Zn(2+) is required as a cofactor.

The catalysed reaction is 5-(methylsulfanyl)-D-ribulose 1-phosphate = 5-methylsulfanyl-2,3-dioxopentyl phosphate + H2O. The protein operates within amino-acid biosynthesis; L-methionine biosynthesis via salvage pathway; L-methionine from S-methyl-5-thio-alpha-D-ribose 1-phosphate: step 2/6. Its function is as follows. Catalyzes the dehydration of methylthioribulose-1-phosphate (MTRu-1-P) into 2,3-diketo-5-methylthiopentyl-1-phosphate (DK-MTP-1-P). This chain is Methylthioribulose-1-phosphate dehydratase, found in Xylella fastidiosa (strain Temecula1 / ATCC 700964).